Reading from the N-terminus, the 318-residue chain is MFLINVLTVTLPILLAVAFLTLVERKALGYMQLRKGPNVVGPYGLLQPIADAIKLFTKEPVYPQTSSKFLFTIAPILALTLALTVWAPLPMPYPLINLNLSLLFILAMSSLMVYSILWSGWASNSKYALMGALRAVAQTISYEVSMTTIILSMVLMNGSFTLTAFATTQEHLWLIFPMWPLMMMWFTSTLAETNRAPFDLTEGESELVSGFNVEYSAGPFALFFMAEYANIIMMNALTVILFMGTSCNPQMPEISTINFVVKTMILTICFLWVRASYPRFRYDQLMYLLWKNFLPLTLALCMWHISILISLACIPPQA.

8 helical membrane-spanning segments follow: residues 2–22 (FLIN…FLTL), 69–89 (FLFT…WAPL), 102–122 (LLFI…SGWA), 146–166 (MTTI…TAFA), 171–191 (HLWL…STLA), 222–242 (LFFM…VILF), 253–273 (EIST…FLWV), and 294–314 (LPLT…LACI).

It belongs to the complex I subunit 1 family.

The protein localises to the mitochondrion inner membrane. The enzyme catalyses a ubiquinone + NADH + 5 H(+)(in) = a ubiquinol + NAD(+) + 4 H(+)(out). Core subunit of the mitochondrial membrane respiratory chain NADH dehydrogenase (Complex I) that is believed to belong to the minimal assembly required for catalysis. Complex I functions in the transfer of electrons from NADH to the respiratory chain. The immediate electron acceptor for the enzyme is believed to be ubiquinone. The sequence is that of NADH-ubiquinone oxidoreductase chain 1 (MT-ND1) from Mammuthus primigenius (Siberian woolly mammoth).